Reading from the N-terminus, the 466-residue chain is Chromosomal replication initiator protein DnaA (466 aa).

Residues 1–77 form a domain I, interacts with DnaA modulators region; the sequence is MSQEIWADVL…GAEHPQVEFQ (77 aa). The tract at residues 77–121 is domain II; that stretch reads QVLPAAQDALLLPNDPPPAPEAAAPTPKTKAAPTPPPSTPGDNRK. Positions 87 to 122 are disordered; the sequence is LLPNDPPPAPEAAAPTPKTKAAPTPPPSTPGDNRKT. Over residues 97–108 the composition is skewed to low complexity; that stretch reads EAAAPTPKTKAA. The interval 122–338 is domain III, AAA+ region; that stretch reads TLNPKYTFEN…GALMRVVAFA (217 aa). ATP is bound by residues glycine 166, glycine 168, lysine 169, and threonine 170. Residues 339–466 are domain IV, binds dsDNA; the sequence is SLNNVPFSRA…GKEEEEEVGA (128 aa).

The protein belongs to the DnaA family. As to quaternary structure, oligomerizes as a right-handed, spiral filament on DNA at oriC.

It localises to the cytoplasm. Its function is as follows. Plays an essential role in the initiation and regulation of chromosomal replication. ATP-DnaA binds to the origin of replication (oriC) to initiate formation of the DNA replication initiation complex once per cell cycle. Binds the DnaA box (a 9 base pair repeat at the origin) and separates the double-stranded (ds)DNA. Forms a right-handed helical filament on oriC DNA; dsDNA binds to the exterior of the filament while single-stranded (ss)DNA is stabiized in the filament's interior. The ATP-DnaA-oriC complex binds and stabilizes one strand of the AT-rich DNA unwinding element (DUE), permitting loading of DNA polymerase. After initiation quickly degrades to an ADP-DnaA complex that is not apt for DNA replication. Binds acidic phospholipids. Functionally, strand separation requires the DnaA boxes and adjacent DnaA-trio motifs but works equally well with ADP or ATP. This is Chromosomal replication initiator protein DnaA from Deinococcus radiodurans (strain ATCC 13939 / DSM 20539 / JCM 16871 / CCUG 27074 / LMG 4051 / NBRC 15346 / NCIMB 9279 / VKM B-1422 / R1).